A 346-amino-acid polypeptide reads, in one-letter code: Large ribosomal subunit protein uL1c (346 aa).

Residues Met1 to Ser70 constitute a chloroplast transit peptide. Tyr129 carries the phosphotyrosine modification. At Thr177 the chain carries Phosphothreonine. At Ser197 the chain carries Phosphoserine.

Belongs to the universal ribosomal protein uL1 family. In terms of assembly, part of the 50S ribosomal subunit.

It localises to the plastid. The protein resides in the chloroplast. In terms of biological role, this protein binds directly to 23S ribosomal RNA. This is Large ribosomal subunit protein uL1c (RPL1) from Arabidopsis thaliana (Mouse-ear cress).